A 416-amino-acid polypeptide reads, in one-letter code: Mitochondrial inner membrane i-AAA protease complex subunit MGR1 (416 aa).

The segment at 1-28 (MAVFTPPSGNSNSTDHTHTQDDHDKDDN) is disordered. At 1–56 (MAVFTPPSGNSNSTDHTHTQDDHDKDDNDIKKFYIRPSLGLKLWGPLVPAPDNLPG) the chain is on the mitochondrial intermembrane side. Positions 15–28 (DHTHTQDDHDKDDN) are enriched in basic and acidic residues. The chain crosses the membrane as a helical span at residues 57–73 (LYTLITIQSAVGFFALW). The Mitochondrial matrix segment spans residues 74-151 (RLRRLYKLPP…RQSRFVSVRK (78 aa)). The helical transmembrane segment at 152-169 (LLWGLFGSLLLSQSLLEL) threads the bilayer. Residues 170-416 (TRLNFLKYDP…PKALTNEKTH (247 aa)) lie on the Mitochondrial intermembrane side of the membrane. Over residues 390-400 (SHTKTPTSTDQ) the composition is skewed to polar residues. Residues 390 to 416 (SHTKTPTSTDQPLPGPTPKALTNEKTH) form a disordered region.

This sequence belongs to the MGR1 family. As to quaternary structure, component of the mitochondrial inner membrane i-AAA protease complex composed of at least MRG1 and YME1. Interacts directly with YME1.

Its subcellular location is the mitochondrion inner membrane. Component of the mitochondrial inner membrane i-AAA protease complex required for mitochondrial inner membrane protein turnover. Required for growth of cells lacking the mitochondrial genome. In Saccharomyces cerevisiae (strain YJM789) (Baker's yeast), this protein is Mitochondrial inner membrane i-AAA protease complex subunit MGR1 (MGR1).